The chain runs to 291 residues: Probable L-ascorbate peroxidase 4, peroxisomal (291 aa).

Histidine 40 (proton acceptor) is an active-site residue. Histidine 160 serves as a coordination point for heme b. The K(+) site is built by threonine 161, threonine 177, and aspartate 184. A helical transmembrane segment spans residues 263–283 (VLAQSAVGVAVAAAVVIVSYL).

It belongs to the peroxidase family. Ascorbate peroxidase subfamily. Heme b is required as a cofactor. Expressed in leaves, stems and flowers.

It is found in the peroxisome membrane. The enzyme catalyses L-ascorbate + H2O2 = L-dehydroascorbate + 2 H2O. Plays a key role in hydrogen peroxide removal. This is Probable L-ascorbate peroxidase 4, peroxisomal from Oryza sativa subsp. japonica (Rice).